The primary structure comprises 191 residues: C-type lectin domain family 2 member D (191 aa).

Residues 1-38 are Cytoplasmic-facing; it reads MHDSNNVEKDITPSELPANPGCLHSKEHSIKATLIWRL. Residues 39 to 59 traverse the membrane as a helical; Signal-anchor for type II membrane protein segment; the sequence is FFLIMFLTIIVCGMVAALSAI. Residues 60-191 lie on the Extracellular side of the membrane; sequence RANCHQEPSV…WICSKSDIHV (132 aa). Cys-75 and Cys-86 are disulfide-bonded. One can recognise a C-type lectin domain in the interval 82 to 185; the sequence is FQRKCFYFSD…HYTERKWICS (104 aa). N-linked (GlcNAc...) asparagine glycans are attached at residues Asn-95 and Asn-147. A disulfide bridge links Cys-103 with Cys-184.

As to quaternary structure, homodimer; disulfide-linked. Post-translationally, N-glycosylated. As to expression, detected in peripheral blood leukocytes, osteoblasts, lymph node, thymus and spleen. Isoform 1, isoform 2 and isoform 4 are expressed in T- and B-lymphocytes, and at lower levels in NK cells. They are also expressed in B-cell lines and LPS-matured monocyte-derived dendritic cells.

It is found in the cell membrane. It localises to the endoplasmic reticulum. Its function is as follows. Receptor for KLRB1 that protects target cells against natural killer cell-mediated lysis. Inhibits osteoclast formation. Inhibits bone resorption. Modulates the release of interferon-gamma. Binds high molecular weight sulfated glycosaminoglycans. The sequence is that of C-type lectin domain family 2 member D (CLEC2D) from Homo sapiens (Human).